Here is a 282-residue protein sequence, read N- to C-terminus: Acetyl-coenzyme A carboxylase carboxyl transferase subunit beta (282 aa).

Residues 25 to 282 enclose the CoA carboxyltransferase N-terminal domain; it reads LWTKCVSCGE…SSILTMLYRP (258 aa). 4 residues coordinate Zn(2+): Cys-29, Cys-32, Cys-48, and Cys-51. The C4-type zinc finger occupies 29-51; it reads CVSCGETIYTKDIENNLNVCPKC.

The protein belongs to the AccD/PCCB family. Acetyl-CoA carboxylase is a heterohexamer composed of biotin carboxyl carrier protein (AccB), biotin carboxylase (AccC) and two subunits each of ACCase subunit alpha (AccA) and ACCase subunit beta (AccD). Zn(2+) is required as a cofactor.

The protein resides in the cytoplasm. The enzyme catalyses N(6)-carboxybiotinyl-L-lysyl-[protein] + acetyl-CoA = N(6)-biotinyl-L-lysyl-[protein] + malonyl-CoA. Its pathway is lipid metabolism; malonyl-CoA biosynthesis; malonyl-CoA from acetyl-CoA: step 1/1. Its function is as follows. Component of the acetyl coenzyme A carboxylase (ACC) complex. Biotin carboxylase (BC) catalyzes the carboxylation of biotin on its carrier protein (BCCP) and then the CO(2) group is transferred by the transcarboxylase to acetyl-CoA to form malonyl-CoA. In Citrifermentans bemidjiense (strain ATCC BAA-1014 / DSM 16622 / JCM 12645 / Bem) (Geobacter bemidjiensis), this protein is Acetyl-coenzyme A carboxylase carboxyl transferase subunit beta.